The following is a 387-amino-acid chain: Galactokinase (387 aa).

Position 33–36 (33–36 (EHTD)) interacts with substrate. ATP contacts are provided by residues Ser67 and 124–130 (GSGLSSS). 2 residues coordinate Mg(2+): Ser130 and Glu162. Asp174 functions as the Proton acceptor in the catalytic mechanism. Tyr224 lines the substrate pocket.

The protein belongs to the GHMP kinase family. GalK subfamily.

It is found in the cytoplasm. The catalysed reaction is alpha-D-galactose + ATP = alpha-D-galactose 1-phosphate + ADP + H(+). It functions in the pathway carbohydrate metabolism; galactose metabolism. Functionally, catalyzes the transfer of the gamma-phosphate of ATP to D-galactose to form alpha-D-galactose-1-phosphate (Gal-1-P). The protein is Galactokinase of Ligilactobacillus salivarius (strain UCC118) (Lactobacillus salivarius).